The sequence spans 411 residues: Lissencephaly-1 homolog (411 aa).

In terms of domain architecture, LisH spans 9–41 (QREELNQAIADYLGSNGYADSLETFRKEADLST). Residues 56 to 83 (TSVIRLQKKVMELEAKLTEAEKEVIEGA) adopt a coiled-coil conformation. WD repeat units follow at residues 106-147 (GHRA…RSLK), 148-187 (GHTD…ECIK), 191-230 (GHDH…CVKT), 233-272 (GHRE…CKVE), 275-334 (DHEH…CLLT), 337-376 (GHDN…CMKT), and 379-411 (AHQH…WECR).

Belongs to the WD repeat LIS1/nudF family.

It is found in the cytoplasm. The protein resides in the cytoskeleton. The protein localises to the microtubule organizing center. It localises to the centrosome. Functionally, positively regulates the activity of the minus-end directed microtubule motor protein dynein. May enhance dynein-mediated microtubule sliding by targeting dynein to the microtubule plus end. Required for several dynein- and microtubule-dependent processes. In Drosophila yakuba (Fruit fly), this protein is Lissencephaly-1 homolog.